Consider the following 99-residue polypeptide: ATP-dependent Clp protease adapter protein ClpS (99 aa).

This sequence belongs to the ClpS family. As to quaternary structure, binds to the N-terminal domain of the chaperone ClpA.

Functionally, involved in the modulation of the specificity of the ClpAP-mediated ATP-dependent protein degradation. The chain is ATP-dependent Clp protease adapter protein ClpS from Acetivibrio thermocellus (strain ATCC 27405 / DSM 1237 / JCM 9322 / NBRC 103400 / NCIMB 10682 / NRRL B-4536 / VPI 7372) (Clostridium thermocellum).